The primary structure comprises 142 residues: MVLSAADKTNVKGVFAKIGGQAEALGGEALARMFAAYPPTKTYFPHFDLSPGSAQVKAHGKKVASALVEAANNIDDIAGALSKLSDLHAQKLRVDPVNFKLLGHCFLVVVAIHHPSVLTPEVHASLDKFLCAVATVLTAKYR.

The region spanning 2–142 (VLSAADKTNV…VATVLTAKYR (141 aa)) is the Globin domain. His-59 contributes to the O2 binding site. His-88 lines the heme b pocket.

Belongs to the globin family. In terms of assembly, heterotetramer of two alpha chains and two beta chains. Red blood cells.

Involved in oxygen transport from the lung to the various peripheral tissues. This Apus apus (Common swift) protein is Hemoglobin subunit alpha-A (HBAA).